The following is a 649-amino-acid chain: tRNA-guanine(15) transglycosylase (649 aa).

Aspartate 88 (nucleophile) is an active-site residue. Positions 123 and 194 each coordinate substrate. Zn(2+)-binding residues include cysteine 280, cysteine 282, and cysteine 285. Residues 573–648 (KYRIVIDSSV…VAATLRGGLK (76 aa)) form the PUA domain.

It belongs to the archaeosine tRNA-ribosyltransferase family. It depends on Zn(2+) as a cofactor.

It catalyses the reaction guanosine(15) in tRNA + 7-cyano-7-deazaguanine = 7-cyano-7-carbaguanosine(15) in tRNA + guanine. The protein operates within tRNA modification; archaeosine-tRNA biosynthesis. Functionally, exchanges the guanine residue with 7-cyano-7-deazaguanine (preQ0) at position 15 in the dihydrouridine loop (D-loop) of archaeal tRNAs. The polypeptide is tRNA-guanine(15) transglycosylase (Methanococcus maripaludis (strain DSM 14266 / JCM 13030 / NBRC 101832 / S2 / LL)).